A 264-amino-acid polypeptide reads, in one-letter code: 2',3'-cyclic-nucleotide 2'-phosphodiesterase (264 aa).

4 residues coordinate Fe cation: D8, E39, N40, and N67. Catalysis depends on H68, which acts as the Proton donor. Residues H150, H175, and H177 each coordinate Fe cation.

It belongs to the YmdB-like family. In terms of assembly, homodimer. Requires Fe(2+) as cofactor. Fe(3+) serves as cofactor.

Its subcellular location is the cytoplasm. The enzyme catalyses a nucleoside 2',3'-cyclic phosphate + H2O = a nucleoside 3'-phosphate + H(+). In terms of biological role, plays a central, regulatory role in the late adaptive responses and affects the levels of many genes. May act via regulation of cAMP levels. Decreases the expression of motility genes and induces genes involved in biofilm formation, by controlling the expression of SlrR. Required for formation of intercellular nanotubes that bridge neighboring cells to allow molecular exchange. Plays a key role in directing the early stages of colony development. In vitro, has a metal-dependent phosphodiesterase activity against 2',3'-cAMP and 2',3'-cGMP. Also has 3',5'-cyclic-nucleotide phosphodiesterase activity, but cannot use cyclic di-AMP or cyclic di-GMP, and does not have phosphatase activity. This chain is 2',3'-cyclic-nucleotide 2'-phosphodiesterase (ymdB), found in Bacillus subtilis (strain 168).